Consider the following 421-residue polypeptide: Gamma-glutamyl phosphate reductase (421 aa).

Belongs to the gamma-glutamyl phosphate reductase family.

The protein resides in the cytoplasm. The enzyme catalyses L-glutamate 5-semialdehyde + phosphate + NADP(+) = L-glutamyl 5-phosphate + NADPH + H(+). Its pathway is amino-acid biosynthesis; L-proline biosynthesis; L-glutamate 5-semialdehyde from L-glutamate: step 2/2. Its function is as follows. Catalyzes the NADPH-dependent reduction of L-glutamate 5-phosphate into L-glutamate 5-semialdehyde and phosphate. The product spontaneously undergoes cyclization to form 1-pyrroline-5-carboxylate. The protein is Gamma-glutamyl phosphate reductase of Brucella abortus (strain 2308).